A 139-amino-acid chain; its full sequence is Small ribosomal subunit protein uS12 (139 aa).

The interval 118–139 (AGVANRNQSRSRYGTKKPKPKS) is disordered. The span at 130–139 (YGTKKPKPKS) shows a compositional bias: basic residues.

The protein belongs to the universal ribosomal protein uS12 family. In terms of assembly, part of the 30S ribosomal subunit. Contacts proteins S8 and S17. May interact with IF1 in the 30S initiation complex.

Its function is as follows. With S4 and S5 plays an important role in translational accuracy. Functionally, interacts with and stabilizes bases of the 16S rRNA that are involved in tRNA selection in the A site and with the mRNA backbone. Located at the interface of the 30S and 50S subunits, it traverses the body of the 30S subunit contacting proteins on the other side and probably holding the rRNA structure together. The combined cluster of proteins S8, S12 and S17 appears to hold together the shoulder and platform of the 30S subunit. This is Small ribosomal subunit protein uS12 from Mycoplasma mobile (strain ATCC 43663 / 163K / NCTC 11711) (Mesomycoplasma mobile).